The primary structure comprises 231 residues: PX domain-containing protein 1 (231 aa).

Residues 1 to 134 (MASAVFEGTS…TFFERSPLDQ (134 aa)) enclose the PX domain.

This chain is PX domain-containing protein 1 (PXDC1), found in Homo sapiens (Human).